The primary structure comprises 370 residues: MKNEVAISTSHLDAGATGTGLTYKDAGVDIDSGNALVQAIKPLAASTKRPGADASLGGFGAIFDLAAAGYSDPLLITATDGVGTKLKIALDSGIHDSVGIDLVAMCVNDLVVQGGEPLLFLDYFATSRLQVPVASAVVKGIAEGCLQAGCALVGGETAEMPGMYGNNDYDLAGFAVGAVERSQLLTDDRIGLGDVLLGLASSGVHSNGFSLVRRIVERSGLAWDAPAPFAPETTLARALLTPTRIYVKSCLALHRAGLVHGFAHITGGGFWENIPRVLPQGACAHLDGLSWPFPPVFRWLMDQGGVSAHEMARTFNCGIGMVVAVPADKAEAAIALLGEHGETVHRLGTIAARGEGEAVIIDHLDEAFAR.

Belongs to the AIR synthase family.

The protein resides in the cytoplasm. It catalyses the reaction 2-formamido-N(1)-(5-O-phospho-beta-D-ribosyl)acetamidine + ATP = 5-amino-1-(5-phospho-beta-D-ribosyl)imidazole + ADP + phosphate + H(+). It functions in the pathway purine metabolism; IMP biosynthesis via de novo pathway; 5-amino-1-(5-phospho-D-ribosyl)imidazole from N(2)-formyl-N(1)-(5-phospho-D-ribosyl)glycinamide: step 2/2. The protein is Phosphoribosylformylglycinamidine cyclo-ligase of Rhodospirillum rubrum (strain ATCC 11170 / ATH 1.1.1 / DSM 467 / LMG 4362 / NCIMB 8255 / S1).